A 529-amino-acid polypeptide reads, in one-letter code: Neuronal acetylcholine receptor subunit alpha-2 (529 aa).

An N-terminal signal peptide occupies residues 1-26 (MGPSCPVFLSFTKLSLWWLLLTPAGG). The segment at 27–56 (EEAKRPPPRAPGDPLSSPSPTALPQGGSHT) is disordered. Residues 27–264 (EEAKRPPPRA…VTYAFIIRRL (238 aa)) are Extracellular-facing. N-linked (GlcNAc...) asparagine glycosylation is found at N79 and N129. A disulfide bond links C183 and C197. N235 carries an N-linked (GlcNAc...) asparagine glycan. Cysteines 247 and 248 form a disulfide. 3 helical membrane passes run 265 to 289 (PLFYTINLIIPCLLISCLTVLVFYL), 297 to 315 (ITLCISVLLSLTVFLLLIT), and 331 to 352 (YLLFTMIFVTLSIVITVFVLNV). The Cytoplasmic portion of the chain corresponds to 353–502 (HHRSPSTHTM…WKYVAMVIDR (150 aa)). The chain crosses the membrane as a helical span at residues 503–521 (IFLWLFIIVCFLGTIGLFL).

It belongs to the ligand-gated ion channel (TC 1.A.9) family. Acetylcholine receptor (TC 1.A.9.1) subfamily. Alpha-2/CHRNA2 sub-subfamily. Neuronal AChR is composed of two different types of subunits: alpha and non-alpha (beta). CHRNA2/alpha-2 subunit can be combined to CHRNB2/beta-2 or CHRNB4/beta-4 to give rise to functional receptors. Both CHRNA2:CHRNB2 and CHRNA2:CHRNB4 nAChR complexes are heteropentamers with two subtypes: LS (low agonist sensitivity) with a (CHRNA2)3:(CHRNB2/4)2 and HS (high agonist sensitivity) with a (CHRNA2)2:(CHRNB2/4)3 stoichiometries; the subtypes differ in their subunit binding interfaces which are involved in ligand binding.

It localises to the synaptic cell membrane. It is found in the cell membrane. It catalyses the reaction Ca(2+)(in) = Ca(2+)(out). It carries out the reaction K(+)(in) = K(+)(out). The enzyme catalyses Na(+)(in) = Na(+)(out). In terms of biological role, component of neuronal acetylcholine receptors (nAChRs) that function as pentameric, ligand-gated cation channels with high calcium permeability among other activities. nAChRs are excitatory neurotrasnmitter receptors formed by a collection of nAChR subunits known to mediate synaptic transmission in the nervous system and the neuromuscular junction. Each nAchR subunit confers differential attributes to channel properties, including activation, deactivation and desensitization kinetics, pH sensitivity, cation permeability, and binding to allosteric modulators. CHRNA2 forms heteropentameric neuronal acetylcholine receptors with CHRNB2 and CHRNB4 and plays a role in nicotine dependence. This chain is Neuronal acetylcholine receptor subunit alpha-2 (CHRNA2), found in Pan troglodytes (Chimpanzee).